Here is a 556-residue protein sequence, read N- to C-terminus: GDP-Man:Man(3)GlcNAc(2)-PP-Dol alpha-1,2-mannosyltransferase (556 aa).

Over methionine 1–threonine 7 the chain is Lumenal. The chain crosses the membrane as a helical span at residues tyrosine 8–tryptophan 28. Residues arginine 29–tyrosine 184 are Cytoplasmic-facing. Over residues serine 64 to threonine 79 the composition is skewed to basic and acidic residues. The segment at serine 64–threonine 86 is disordered. Residues phenylalanine 185 to leucine 205 constitute an intramembrane region (helical). Over valine 206–histidine 454 the chain is Cytoplasmic. An intramembrane region (helical) is located at residues phenylalanine 455 to glycine 475. The Cytoplasmic segment spans residues glycine 476 to glutamine 556.

This sequence belongs to the glycosyltransferase group 1 family. Glycosyltransferase 4 subfamily.

It is found in the endoplasmic reticulum membrane. It catalyses the reaction an alpha-D-Man-(1-&gt;3)-[alpha-D-Man-(1-&gt;6)]-beta-D-Man-(1-&gt;4)-beta-D-GlcNAc-(1-&gt;4)-alpha-D-GlcNAc-diphospho-di-trans,poly-cis-dolichol + 2 GDP-alpha-D-mannose = an alpha-D-Man-(1-&gt;2)-alpha-D-Man-(1-&gt;2)-alpha-D-Man-(1-&gt;3)-[alpha-D-Man-(1-&gt;6)]-beta-D-Man-(1-&gt;4)-beta-D-GlcNAc-(1-&gt;4)-alpha-D-GlcNAc-diphospho-di-trans,poly-cis-dolichol + 2 GDP + 2 H(+). It functions in the pathway protein modification; protein glycosylation. Its function is as follows. GDP-Man:Man(3)GlcNAc(2)-PP-Dol alpha-1,2-mannosyltransferase that operates in the biosynthetic pathway of dolichol-linked oligosaccharides, the glycan precursors employed in protein asparagine (N)-glycosylation. The assembly of dolichol-linked oligosaccharides begins on the cytosolic side of the endoplasmic reticulum membrane and finishes in its lumen. The sequential addition of sugars to dolichol pyrophosphate produces dolichol-linked oligosaccharides containing fourteen sugars, including two GlcNAcs, nine mannoses and three glucoses. Once assembled, the oligosaccharide is transferred from the lipid to nascent proteins by oligosaccharyltransferases. Catalyzes, on the cytoplasmic face of the endoplasmic reticulum, the addition of the fourth and fifth mannose residues to the dolichol-linked oligosaccharide chain, to produce Man(5)GlcNAc(2)-PP-dolichol core oligosaccharide. In Neurospora crassa (strain ATCC 24698 / 74-OR23-1A / CBS 708.71 / DSM 1257 / FGSC 987), this protein is GDP-Man:Man(3)GlcNAc(2)-PP-Dol alpha-1,2-mannosyltransferase (alg-11).